The chain runs to 745 residues: Kinesin-like protein KIN-14M (745 aa).

The segment at Met-1–Pro-31 is disordered. Residues Met-1–Thr-35 are globular. Microtubule-binding stretches follow at residues Tyr-65–Gln-77 and Ser-198–Gly-745. Coiled-coil stretches lie at residues Phe-76–Glu-223 and Lys-259–Arg-389. In terms of domain architecture, Kinesin motor spans Asn-387–Cys-724. Gly-472–Thr-479 provides a ligand contact to ATP.

Belongs to the TRAFAC class myosin-kinesin ATPase superfamily. Kinesin family. KIN-14 subfamily. Bind to microtubules in an ATP-insensitive manner (in vitro). Homodimer and heterodimer with KIN14N/KATC (in vitro).

The protein localises to the cytoplasm. It is found in the cytoskeleton. The chain is Kinesin-like protein KIN-14M from Arabidopsis thaliana (Mouse-ear cress).